The chain runs to 351 residues: Transcription elongation factor A N-terminal and central domain-containing protein (351 aa).

In terms of domain architecture, TFIIS N-terminal spans N5–T82. Disordered stretches follow at residues A86–S119 and L144–P169. Positions S103 to S119 are enriched in polar residues. Over residues K145–E165 the composition is skewed to basic and acidic residues. The TFIIS central domain maps to M173–G289.

The protein is Transcription elongation factor A N-terminal and central domain-containing protein (TCEANC) of Homo sapiens (Human).